Reading from the N-terminus, the 493-residue chain is Poly(ribitol-phosphate) alpha-N-acetylglucosaminyltransferase (493 aa).

UDP-N-acetyl-alpha-D-glucosamine-binding positions include G17, K59, H249, R326, K331, T383, and 403 to 411; that span reads EGQGLSMIE.

Belongs to the glycosyltransferase group 1 family. As to quaternary structure, homotrimer.

Its subcellular location is the cytoplasm. It carries out the reaction 4-O-[(D-ribitylphospho)(n)-di{(2R)-glycerylphospho}]-N-acetyl-beta-D-mannosaminyl-(1-&gt;4)-N-acetyl-alpha-D-glucosaminyl di-trans,octa-cis-undecaprenyl diphosphate + n UDP-N-acetyl-alpha-D-glucosamine = 4-O-([2-N-acetyl-alpha-D-glucosaminyl-1-D-ribitylphospho](n)-di{[2R]-1-glycerylphospho})-N-acetyl-beta-D-mannosaminyl-(1-&gt;4)-N-acetyl-alpha-D-glucosaminyl di-trans,octa-cis-undecaprenyl diphosphate + n UDP + n H(+). The protein operates within cell wall biogenesis; poly(ribitol phosphate) teichoic acid biosynthesis. Functionally, attaches N-acetyl-alpha-D-glucosamine residues to poly(RboP)-wall teichoic acids (WTAs). The sequence is that of Poly(ribitol-phosphate) alpha-N-acetylglucosaminyltransferase from Staphylococcus aureus (strain COL).